The sequence spans 454 residues: tRNA modification GTPase MnmE (454 aa).

Residues Arg23, Glu80, and Lys120 each contribute to the (6S)-5-formyl-5,6,7,8-tetrahydrofolate site. Residues 216–377 (GMKVVIAGRP…LRNHLKQSMG (162 aa)) form the TrmE-type G domain. Asn226 contacts K(+). Residues 226 to 231 (NAGKSS), 245 to 251 (TDIAGTT), 270 to 273 (DTAG), 335 to 338 (NKAD), and 358 to 360 (SAR) contribute to the GTP site. Ser230 serves as a coordination point for Mg(2+). Residues Thr245, Ile247, and Thr250 each coordinate K(+). Thr251 serves as a coordination point for Mg(2+). Lys454 is a (6S)-5-formyl-5,6,7,8-tetrahydrofolate binding site.

The protein belongs to the TRAFAC class TrmE-Era-EngA-EngB-Septin-like GTPase superfamily. TrmE GTPase family. As to quaternary structure, homodimer. Heterotetramer of two MnmE and two MnmG subunits. K(+) serves as cofactor.

It localises to the cytoplasm. Functionally, exhibits a very high intrinsic GTPase hydrolysis rate. Involved in the addition of a carboxymethylaminomethyl (cmnm) group at the wobble position (U34) of certain tRNAs, forming tRNA-cmnm(5)s(2)U34. In Klebsiella pneumoniae subsp. pneumoniae (strain ATCC 700721 / MGH 78578), this protein is tRNA modification GTPase MnmE.